The following is a 144-amino-acid chain: tRNA-specific adenosine deaminase (144 aa).

Residues 1–116 (MEQALKQAGI…SNLRYFNSSV (116 aa)) enclose the CMP/dCMP-type deaminase domain. Zn(2+) is bound at residue histidine 48. Catalysis depends on glutamate 50, which acts as the Proton donor. Residues cysteine 78 and cysteine 81 each coordinate Zn(2+).

It belongs to the cytidine and deoxycytidylate deaminase family. In terms of assembly, homodimer. The cofactor is Zn(2+).

It carries out the reaction adenosine(34) in tRNA + H2O + H(+) = inosine(34) in tRNA + NH4(+). Catalyzes the deamination of adenosine to inosine at the wobble position 34 of tRNA(Arg2). This Rickettsia felis (strain ATCC VR-1525 / URRWXCal2) (Rickettsia azadi) protein is tRNA-specific adenosine deaminase.